The chain runs to 654 residues: Cytochrome B pre-mRNA-processing protein 1 (654 aa).

It localises to the mitochondrion. In terms of biological role, responsible for conferring a stable 5'-end on cytochrome b mRNA. The polypeptide is Cytochrome B pre-mRNA-processing protein 1 (CBP1) (Saccharomyces cerevisiae (strain ATCC 204508 / S288c) (Baker's yeast)).